The primary structure comprises 39 residues: Photosystem II reaction center protein X (39 aa).

The chain crosses the membrane as a helical span at residues 11-31 (SLLWGAIVVVIPLSAALLFIS).

It belongs to the PsbX family. Type 1 subfamily. In terms of assembly, PSII is composed of 1 copy each of membrane proteins PsbA, PsbB, PsbC, PsbD, PsbE, PsbF, PsbH, PsbI, PsbJ, PsbK, PsbL, PsbM, PsbT, PsbX, PsbY, PsbZ, Psb30/Ycf12, at least 3 peripheral proteins of the oxygen-evolving complex and a large number of cofactors. It forms dimeric complexes.

The protein resides in the plastid. The protein localises to the cyanelle thylakoid membrane. In terms of biological role, involved in the binding and/or turnover of quinones at the Q(B) site of photosystem II (PSII). PSII is a light-driven water plastoquinone oxidoreductase, using light energy to abstract electrons from H(2)O, generating a proton gradient subsequently used for ATP formation. In Cyanophora paradoxa, this protein is Photosystem II reaction center protein X.